We begin with the raw amino-acid sequence, 478 residues long: D-ribulose kinase (478 aa).

The transit peptide at 1–38 directs the protein to the chloroplast; that stretch reads MLILRQFQISSFELFQSPKQTGFYSSSRSVPLPRTRFY. Residues aspartate 60, 64–67, and aspartate 278 each bind substrate; that span reads SGGR. ATP is bound by residues serine 300, glycine 338, and 433 to 437; that span reads GGAKN.

This sequence belongs to the FGGY kinase family. A divalent metal cation is required as a cofactor.

The protein localises to the plastid. It is found in the chloroplast. It catalyses the reaction D-ribulose + ATP = D-ribulose 5-phosphate + ADP + H(+). Exhibits ATP hydrolysis without substrate. Can phosphorylate D-ribulose with low efficiency. The polypeptide is D-ribulose kinase (Arabidopsis thaliana (Mouse-ear cress)).